The sequence spans 204 residues: Somatotropin (204 aa).

A signal peptide spans 1–17 (MDRAILLLSVLSVGVSS). Gln18 bears the Pyrrolidone carboxylic acid mark. His35 lines the Zn(2+) pocket. An intrachain disulfide couples Cys69 to Cys177. Glu186 lines the Zn(2+) pocket. An intrachain disulfide couples Cys194 to Cys202.

This sequence belongs to the somatotropin/prolactin family.

The protein localises to the secreted. Functionally, growth hormone plays an important role in growth control and is involved in the regulation of several anabolic processes. Implicated as an osmoregulatory substance important for seawater adaptation. In Dicentrarchus labrax (European seabass), this protein is Somatotropin (gh).